We begin with the raw amino-acid sequence, 508 residues long: 2'-5'-oligoadenylate synthase-like protein 2 (508 aa).

S69 contacts ATP. Mg(2+) contacts are provided by D81, D83, and D154. ATP is bound by residues R213 and K216. The Ubiquitin-like domain occupies 435–473 (ILVFVKYPGGQSKPFTIDPDDTILDLKEKIEDAGGPCAE).

It belongs to the 2-5A synthase family. It depends on Mg(2+) as a cofactor. As to expression, strongly expressed in spleen dendritic cells, whereas, in bone marrow-derived dendritic cells, the amount increases during the maturation process. Expressed in many organs, the highest levels being in thymus, lung, and bone marrow.

It catalyses the reaction 3 ATP = 5'-triphosphoadenylyl-(2'-&gt;5')-adenylyl-(2'-&gt;5')-adenosine + 2 diphosphate. Its activity is regulated as follows. Produced as a latent enzyme which is activated by dsRNA generated during the course of viral infection. The dsRNA activator must be at least 15 nucleotides long, and no modification of the 2'-hydroxyl group is tolerated. ssRNA or dsDNA do not act as activators. In terms of biological role, interferon-induced, dsRNA-activated antiviral enzyme which plays a critical role in cellular innate antiviral response. Synthesizes oligomers of 2'-5'-oligoadenylates (2-5A) from ATP which then bind to the inactive monomeric form of ribonuclease L (RNase L) leading to its dimerization and subsequent activation. Activation of RNase L leads to degradation of cellular as well as viral RNA, resulting in the inhibition of protein synthesis, thus terminating viral replication. Can mediate the antiviral effect via the classical RNase L-dependent pathway or an alternative antiviral pathway independent of RNase L. The chain is 2'-5'-oligoadenylate synthase-like protein 2 (Oasl2) from Mus musculus (Mouse).